The following is a 455-amino-acid chain: Protein 60A (455 aa).

The N-terminal stretch at 1–36 is a signal peptide; the sequence is MSGLRNTSEAVAVLASLGLGMVLLMFVATTPPAVEA. A propeptide spanning residues 37–335 is cleaved from the precursor; it reads TQSGIYIDNG…SASHPRKRKK (299 aa). The span at 108-118 shows a compositional bias: acidic residues; it reads GLSDQDEDDDY. A disordered region spans residues 108–138; sequence GLSDQDEDDDYERGHRSRRSADLEEDEGEQQ. 2 N-linked (GlcNAc...) asparagine glycosylation sites follow: asparagine 238 and asparagine 250. Residues 316–345 are disordered; that stretch reads AHSSHHRSKRSASHPRKRKKSVSPNNVPLL. Residues 318–336 show a composition bias toward basic residues; that stretch reads SSHHRSKRSASHPRKRKKS. 3 disulfides stabilise this stretch: cysteine 354–cysteine 420, cysteine 383–cysteine 452, and cysteine 387–cysteine 454. A glycan (N-linked (GlcNAc...) asparagine) is linked at asparagine 396.

It belongs to the TGF-beta family. In terms of assembly, homodimer; disulfide-linked. Interacts with nord and dpp. As to expression, expressed in cells of the developing foregut and hindgut during germ band retraction and later embryonic stages. Expressed in the wing disk, mainly in the posterior compartment in the pteropleural and medial regions extending into the progenitors of the scutellum. High levels are found within the posterior and anterior compartments of the wing pouch and low levels in the hinge region. In the eye/antennal disk, expression is highest anterior to the morphogenetic furrow and in the medial regions with lower levels of expression posterior to the morphogenetic furrow. Expressed throughout the posterior compartment of the leg imaginal disks and within the ventral anterior compartment.

It localises to the secreted. Required for the growth of imaginal tissues and for patterning of the adult wing. The sequence is that of Protein 60A (gbb) from Drosophila melanogaster (Fruit fly).